We begin with the raw amino-acid sequence, 139 residues long: Nucleoside diphosphate kinase (139 aa).

Positions 11, 59, 87, 93, 104, and 114 each coordinate ATP. The Pros-phosphohistidine intermediate role is filled by His-117.

The protein belongs to the NDK family. In terms of assembly, homotetramer. The cofactor is Mg(2+).

The protein localises to the cytoplasm. It carries out the reaction a 2'-deoxyribonucleoside 5'-diphosphate + ATP = a 2'-deoxyribonucleoside 5'-triphosphate + ADP. The catalysed reaction is a ribonucleoside 5'-diphosphate + ATP = a ribonucleoside 5'-triphosphate + ADP. In terms of biological role, major role in the synthesis of nucleoside triphosphates other than ATP. The ATP gamma phosphate is transferred to the NDP beta phosphate via a ping-pong mechanism, using a phosphorylated active-site intermediate. In Flavobacterium johnsoniae (strain ATCC 17061 / DSM 2064 / JCM 8514 / BCRC 14874 / CCUG 350202 / NBRC 14942 / NCIMB 11054 / UW101) (Cytophaga johnsonae), this protein is Nucleoside diphosphate kinase.